The sequence spans 353 residues: Aliphatic aldoxime dehydratase (353 aa).

S219 lines the an aliphatic aldoxime pocket. A heme b-binding site is contributed by H299. Residue H320 coordinates an aliphatic aldoxime. H320 is an active-site residue.

The protein belongs to the heme-containing dehydratase family. In terms of assembly, homodimer. The cofactor is heme b.

The enzyme catalyses an aliphatic aldoxime = a nitrile + H2O. Active when the heme iron is in the ferrous state. Activated by FMN, Fe(2+), Sn(2+), Na(2)SO(3), Na(2)S and vitamin K3. Its function is as follows. Catalyzes the dehydration of aldoximes to their corresponding nitrile. Is active toward various arylalkyl- and alkyl-aldoximes, and to a lesser extent toward aryl-aldoximes. This is Aliphatic aldoxime dehydratase from Rhodococcus globerulus.